A 419-amino-acid polypeptide reads, in one-letter code: Gamma-glutamyl phosphate reductase (419 aa).

The protein belongs to the gamma-glutamyl phosphate reductase family.

Its subcellular location is the cytoplasm. The enzyme catalyses L-glutamate 5-semialdehyde + phosphate + NADP(+) = L-glutamyl 5-phosphate + NADPH + H(+). Its pathway is amino-acid biosynthesis; L-proline biosynthesis; L-glutamate 5-semialdehyde from L-glutamate: step 2/2. Its function is as follows. Catalyzes the NADPH-dependent reduction of L-glutamate 5-phosphate into L-glutamate 5-semialdehyde and phosphate. The product spontaneously undergoes cyclization to form 1-pyrroline-5-carboxylate. The sequence is that of Gamma-glutamyl phosphate reductase from Solidesulfovibrio magneticus (strain ATCC 700980 / DSM 13731 / RS-1) (Desulfovibrio magneticus).